A 295-amino-acid polypeptide reads, in one-letter code: Small ribosomal subunit protein uS2 (295 aa).

The segment at 263 to 295 is disordered; sequence KKFSKTKNIDEETNTEFEKALNDADENKNSDNA. The segment covering 278–295 has biased composition (basic and acidic residues); sequence EFEKALNDADENKNSDNA.

The protein belongs to the universal ribosomal protein uS2 family.

This Rickettsia peacockii (strain Rustic) protein is Small ribosomal subunit protein uS2.